We begin with the raw amino-acid sequence, 194 residues long: Large ribosomal subunit protein uL6z/uL6y (194 aa).

At T75 the chain carries Phosphothreonine.

It belongs to the universal ribosomal protein uL6 family.

In Arabidopsis thaliana (Mouse-ear cress), this protein is Large ribosomal subunit protein uL6z/uL6y (RPL9B).